Consider the following 351-residue polypeptide: Anthranilate phosphoribosyltransferase (351 aa).

5-phospho-alpha-D-ribose 1-diphosphate contacts are provided by residues glycine 80, 83-84 (GD), threonine 88, 90-93 (NIST), 108-116 (KHGNRSITS), and serine 120. Anthranilate is bound at residue glycine 80. Serine 92 is a binding site for Mg(2+). An anthranilate-binding site is contributed by asparagine 111. Residue arginine 166 coordinates anthranilate. Residues aspartate 229 and glutamate 230 each coordinate Mg(2+).

It belongs to the anthranilate phosphoribosyltransferase family. In terms of assembly, homodimer. Requires Mg(2+) as cofactor.

The catalysed reaction is N-(5-phospho-beta-D-ribosyl)anthranilate + diphosphate = 5-phospho-alpha-D-ribose 1-diphosphate + anthranilate. Its pathway is amino-acid biosynthesis; L-tryptophan biosynthesis; L-tryptophan from chorismate: step 2/5. In terms of biological role, catalyzes the transfer of the phosphoribosyl group of 5-phosphorylribose-1-pyrophosphate (PRPP) to anthranilate to yield N-(5'-phosphoribosyl)-anthranilate (PRA). This Chlorobaculum tepidum (strain ATCC 49652 / DSM 12025 / NBRC 103806 / TLS) (Chlorobium tepidum) protein is Anthranilate phosphoribosyltransferase.